A 131-amino-acid polypeptide reads, in one-letter code: MAGRGKQLGSGAAKKSTSRSSKAGLQFPVGRIARFLKAGKYAERVGAGAPVYLAAVLEYLAAEVLELAGNAARDNKKTRIVPRHIQLAVRNDEELSKLLGDVTIANGGVMPNIHNLLLPKKAGSSKPTEED.

The interval 1–23 (MAGRGKQLGSGAAKKSTSRSSKA) is disordered. Residues 9 to 23 (GSGAAKKSTSRSSKA) show a composition bias toward low complexity.

This sequence belongs to the histone H2A family. In terms of assembly, the nucleosome is a histone octamer containing two molecules each of H2A, H2B, H3 and H4 assembled in one H3-H4 heterotetramer and two H2A-H2B heterodimers. The octamer wraps approximately 147 bp of DNA. Post-translationally, not ubiquitinated. Expressed in meristems and dividing cells.

The protein localises to the nucleus. Its subcellular location is the chromosome. In terms of biological role, core component of nucleosome. Nucleosomes wrap and compact DNA into chromatin, limiting DNA accessibility to the cellular machineries which require DNA as a template. Histones thereby play a central role in transcription regulation, DNA repair, DNA replication and chromosomal stability. DNA accessibility is regulated via a complex set of post-translational modifications of histones, also called histone code, and nucleosome remodeling. The chain is Probable histone H2A.3 from Arabidopsis thaliana (Mouse-ear cress).